The primary structure comprises 312 residues: Methionyl-tRNA formyltransferase (312 aa).

Residue 109–112 (SLLP) participates in (6S)-5,6,7,8-tetrahydrofolate binding.

This sequence belongs to the Fmt family.

It carries out the reaction L-methionyl-tRNA(fMet) + (6R)-10-formyltetrahydrofolate = N-formyl-L-methionyl-tRNA(fMet) + (6S)-5,6,7,8-tetrahydrofolate + H(+). Functionally, attaches a formyl group to the free amino group of methionyl-tRNA(fMet). The formyl group appears to play a dual role in the initiator identity of N-formylmethionyl-tRNA by promoting its recognition by IF2 and preventing the misappropriation of this tRNA by the elongation apparatus. This is Methionyl-tRNA formyltransferase from Listeria welshimeri serovar 6b (strain ATCC 35897 / DSM 20650 / CCUG 15529 / CIP 8149 / NCTC 11857 / SLCC 5334 / V8).